Reading from the N-terminus, the 244-residue chain is Tetraspanin-2A (244 aa).

Topologically, residues 1–22 are cytoplasmic; sequence MGIGYGASDEQLEKQIGCVKYT. Residues 23–43 traverse the membrane as a helical segment; the sequence is LFCFNIVAWMISTALFALTVW. Residues 44–61 lie on the Extracellular side of the membrane; sequence LRAEPGFNDWLRILEAQS. Residues 62 to 82 form a helical membrane-spanning segment; sequence FYIGVYVLIGISIVMMAVSFL. Residues 83–91 lie on the Cytoplasmic side of the membrane; the sequence is GCLSALMEN. A helical transmembrane segment spans residues 92–112; that stretch reads TLALFVFVGTQVFGFIAIVAG. Topologically, residues 113 to 206 are extracellular; it reads SAVLLQFSTI…TWFFEGKTGW (94 aa). Residues 207-227 traverse the membrane as a helical segment; sequence IVALAMTLGLLNVICAVMSFV. The Cytoplasmic portion of the chain corresponds to 228–244; that stretch reads LVQAVKKEEEQASNYRR.

This sequence belongs to the tetraspanin (TM4SF) family. As to quaternary structure, forms a complex with Ssk and mesh.

It is found in the apicolateral cell membrane. The protein resides in the cell junction. The protein localises to the septate junction. Its function is as follows. Required for assembly of smooth septate junctions (sSJs), together with Ssk and mesh. Important for barrier function of the midgut epithelium. The protein is Tetraspanin-2A of Drosophila melanogaster (Fruit fly).